We begin with the raw amino-acid sequence, 640 residues long: MRYDVEQPSKLDRVRADYNVHYWSQGFFGIDDQGEVYVSPRKDKAHQTQLSSIVKQLEARDLNLPVLVRFPQILHQRVHNICDAFNQAIEEYDYPNKYLLVYPIKVNQQKEVVDEILASQAELEHKQLGLEAGSKPELLAVLAMAQQASSVIVCNGYKDREYIRLALIGEKLGHKVFIVLEKLSELDLVLKEAKSLGVKPRLGLRIRLASQGAGKWQSSGGEKSKFGLAASQVLTVINRLKAENQLEALQLVHFHLGSQMANIRDVRNGVNEAVRFYCELRELGAHIDFFDVGGGLAVDYDGTRSQSSNSMNYGLHEYARNIVSTVSDVCNLYGQPRPVIISESGRSITAHHAVLITNVIGTEAYSPEEIPAPGADAPMLLKNMWRGFEEVQHGTDDRALIEIYNDTQSDLSEAHSQFATGVLNLEHRAWAEQLSLRIYHELRQKMSNKNRFHRPILDELQERLADKFFVNFSLFQSLPDAWGIDQVFPVLPLSGLEEMNDRRAVMLDITCDSDGAVEQYVEGQGIESTLPVPAWTSDKPYLMGFFLVGAYQEILGDMHNLFGDTHSAVVNINDNGESEIAFINEGDTVEDMMRYVHIDVDKIRTNYRQLVSQRVAKEEQETVLAELELGLSGYTYLEDF.

N6-(pyridoxal phosphate)lysine is present on K105. 290-300 provides a ligand contact to substrate; the sequence is FDVGGGLAVDY.

Belongs to the Orn/Lys/Arg decarboxylase class-II family. SpeA subfamily. The cofactor is Mg(2+). It depends on pyridoxal 5'-phosphate as a cofactor.

The catalysed reaction is L-arginine + H(+) = agmatine + CO2. In terms of biological role, catalyzes the biosynthesis of agmatine from arginine. This Vibrio cholerae serotype O1 (strain ATCC 39315 / El Tor Inaba N16961) protein is Biosynthetic arginine decarboxylase.